The sequence spans 313 residues: Uracil-DNA glycosylase (313 aa).

The segment at 35-68 is disordered; it reads DEPMPKKCRRPAGPPKGFISTRGDTSPSSDNNHI. Residues 56 to 68 are compositionally biased toward polar residues; it reads RGDTSPSSDNNHI. Asp-153 serves as the catalytic Proton acceptor.

It belongs to the uracil-DNA glycosylase (UDG) superfamily. UNG family.

Its subcellular location is the host nucleus. It carries out the reaction Hydrolyzes single-stranded DNA or mismatched double-stranded DNA and polynucleotides, releasing free uracil.. Its function is as follows. Excises uracil residues from the DNA which can arise as a result of misincorporation of dUMP residues by DNA polymerase or deamination of cytosines. Therefore may reduce deleterious uracil incorporation into the viral genome, particularly in terminally differentiated cells which lack DNA repair enzymes. This chain is Uracil-DNA glycosylase (MDV014), found in Gallus gallus (Chicken).